The sequence spans 1104 residues: Ankyrin repeat- and BTB/POZ domain-containing protein 3 (1104 aa).

The chain crosses the membrane as a helical span at residues 168–188 (IVLSWGLAAHCTAAALAALSL). The disordered stretch occupies residues 260-301 (SCSGPGSGSGSGPGPSSGPGAAPAADKEREAPGGGAASGGAC). The segment covering 264–276 (PGSGSGSGPGPSS) has biased composition (gly residues). ANK repeat units lie at residues 603 to 632 (QGMT…DLNV), 649 to 678 (RHWT…KVEG), 687 to 716 (YSET…DPLI), 730 to 759 (GDMN…KEKS), and 825 to 854 (TWLE…TIQE). The region spanning 923–989 (SDVTFLVEGR…LYYGGPESLL (67 aa)) is the BTB domain.

The protein resides in the membrane. The polypeptide is Ankyrin repeat- and BTB/POZ domain-containing protein 3 (Homo sapiens (Human)).